The chain runs to 388 residues: MGILGLSKLIADLAPLAIRESEIKNFFGRKVAIDASMCLYQFLIAVRSEGAQLATVNGDPTSHLMGMFYRTIRLLDNGIKPVYVFDGKPPDLKAGELAKRAERREEAEKALKVATDAGDEAEIEKFNRRLVRVTKEHSNEAKELLKLMGVPYVDAPCEAEAQCAALVKAGKVYATATEDMDALTFGSCKLLRYLTYSEARKMPVKEFSYDKVLQGLELTSKEFIDLCILMGCDYCDSIKGIGPKRAIELIKTYRDIETILENIDTSKYIVPENWNYQRARELFVEPEVTDASTIDLKWTAPDEDGLVQFLCGDRQFNEERVRNGARKLLKSKQSQTQVRLDSFFKALPSSPNATAAAKRKAEEIKKSANNKKAKTSGGSGAARGRRPK.

Residues 1-104 are N-domain; sequence MGILGLSKLI…GELAKRAERR (104 aa). Position 34 (aspartate 34) interacts with Mg(2+). Positions 47 and 70 each coordinate DNA. Residues aspartate 86, glutamate 158, glutamate 160, aspartate 179, and aspartate 181 each coordinate Mg(2+). Residues 122–253 form an I-domain region; that stretch reads EIEKFNRRLV…KRAIELIKTY (132 aa). DNA is bound at residue glutamate 158. Positions 231 and 233 each coordinate DNA. Aspartate 233 lines the Mg(2+) pocket. Positions 336–344 are interaction with PCNA; the sequence is TQVRLDSFF. The segment at 351-388 is disordered; sequence PNATAAAKRKAEEIKKSANNKKAKTSGGSGAARGRRPK.

This sequence belongs to the XPG/RAD2 endonuclease family. FEN1 subfamily. As to quaternary structure, interacts with PCNA. Three molecules of FEN1 bind to one PCNA trimer with each molecule binding to one PCNA monomer. PCNA stimulates the nuclease activity without altering cleavage specificity. Mg(2+) serves as cofactor. In terms of processing, phosphorylated. Phosphorylation upon DNA damage induces relocalization to the nuclear plasma.

It localises to the nucleus. The protein resides in the nucleolus. It is found in the nucleoplasm. Its subcellular location is the mitochondrion. Structure-specific nuclease with 5'-flap endonuclease and 5'-3' exonuclease activities involved in DNA replication and repair. During DNA replication, cleaves the 5'-overhanging flap structure that is generated by displacement synthesis when DNA polymerase encounters the 5'-end of a downstream Okazaki fragment. It enters the flap from the 5'-end and then tracks to cleave the flap base, leaving a nick for ligation. Also involved in the long patch base excision repair (LP-BER) pathway, by cleaving within the apurinic/apyrimidinic (AP) site-terminated flap. Acts as a genome stabilization factor that prevents flaps from equilibrating into structures that lead to duplications and deletions. Also possesses 5'-3' exonuclease activity on nicked or gapped double-stranded DNA, and exhibits RNase H activity. Also involved in replication and repair of rDNA and in repairing mitochondrial DNA. The protein is Flap endonuclease 1 of Drosophila mojavensis (Fruit fly).